A 347-amino-acid chain; its full sequence is NADH-ubiquinone oxidoreductase chain 2 (347 aa).

Transmembrane regions (helical) follow at residues 26–46, 60–80, 96–116, 123–143, 151–171, 178–198, 200–220, 240–260, 274–294, and 325–345; these read WLLAWMGLEMNMLAMIPILTM, FLTQATASMLLMMAIMINFML, SMALAALMMKLGLAPFHFWVP, SLTSGMILLTWQKLAPLSILY, ITILTVSGLLSILVGGWGGLN, ILAYSSIAHMGWMLIIMPYNP, LTILNLLIYILMTLSIFMIMM, MMILLTITLLSLGGLPPLSGF, DSIILPMSMAMFALLNLYFYM, and LLPPLIILSTLTLPLTPFLSI.

This sequence belongs to the complex I subunit 2 family. As to quaternary structure, core subunit of respiratory chain NADH dehydrogenase (Complex I) which is composed of 45 different subunits. Interacts with TMEM242.

The protein resides in the mitochondrion inner membrane. It catalyses the reaction a ubiquinone + NADH + 5 H(+)(in) = a ubiquinol + NAD(+) + 4 H(+)(out). Its function is as follows. Core subunit of the mitochondrial membrane respiratory chain NADH dehydrogenase (Complex I) which catalyzes electron transfer from NADH through the respiratory chain, using ubiquinone as an electron acceptor. Essential for the catalytic activity and assembly of complex I. This chain is NADH-ubiquinone oxidoreductase chain 2, found in Dugong dugon (Dugong).